The chain runs to 49 residues: U1-theraphotoxin-Lp1b (49 aa).

4 disulfide bridges follow: Cys4-Cys17, Cys8-Cys41, Cys22-Cys24, and Cys35-Cys46.

Expressed by the venom gland.

It is found in the secreted. Functionally, toxin that causes irreversible contractile paralysis into adult Aedes aegypti resulting in 100% mortality after 24 hours. The protein is U1-theraphotoxin-Lp1b of Lasiodora parahybana (Brazilian salmon pink birdeater).